The following is a 361-amino-acid chain: Mannose-1-phosphate guanyltransferase (361 aa).

This sequence belongs to the transferase hexapeptide repeat family.

The protein resides in the cytoplasm. The catalysed reaction is alpha-D-mannose 1-phosphate + GTP + H(+) = GDP-alpha-D-mannose + diphosphate. Its pathway is nucleotide-sugar biosynthesis; GDP-alpha-D-mannose biosynthesis; GDP-alpha-D-mannose from alpha-D-mannose 1-phosphate (GTP route): step 1/1. Functionally, involved in cell wall synthesis where it is required for glycosylation. Involved in cell cycle progression through cell-size checkpoint. This is Mannose-1-phosphate guanyltransferase (MPG1) from Kluyveromyces lactis (strain ATCC 8585 / CBS 2359 / DSM 70799 / NBRC 1267 / NRRL Y-1140 / WM37) (Yeast).